The sequence spans 505 residues: Lysine--tRNA ligase 1 (505 aa).

The Mg(2+) site is built by aspartate 415 and glutamate 422.

This sequence belongs to the class-II aminoacyl-tRNA synthetase family. In terms of assembly, homodimer. Requires Mg(2+) as cofactor.

It localises to the cytoplasm. It catalyses the reaction tRNA(Lys) + L-lysine + ATP = L-lysyl-tRNA(Lys) + AMP + diphosphate. This chain is Lysine--tRNA ligase 1 (lysS1), found in Mycobacterium bovis (strain ATCC BAA-935 / AF2122/97).